We begin with the raw amino-acid sequence, 292 residues long: MTEFDLSTREGRWKHFGSVDPIEGTKPTTKNEMTDLQSTHKNFLFEIEEVGIKNLIYPVNIDRFQTAGRFSFSTSLNKDEKGINMSRILESVEKHYNNGLELNFDTLYQVLRTLQTNMKQNSSGVDVSGKWFFDRFSPVTNIKAVGNADVTYGLAIEQDQITRKEITIEATVTTLCPCSKEISEYSAHNQRGVVTVKVYLDKNNQVVDDYKDKILDAMEANASSILYPILKRPDEKRVTERAYENPRFVEDLIRLIAADLVEFDWIDGFDIECRNEESIHQHDAFAKLKYRK.

This sequence belongs to the GTP cyclohydrolase IV family.

It carries out the reaction GTP + H2O = 7,8-dihydroneopterin 3'-triphosphate + formate + H(+). It participates in cofactor biosynthesis; 7,8-dihydroneopterin triphosphate biosynthesis; 7,8-dihydroneopterin triphosphate from GTP: step 1/1. Functionally, converts GTP to 7,8-dihydroneopterin triphosphate. In Staphylococcus haemolyticus (strain JCSC1435), this protein is GTP cyclohydrolase FolE2.